The following is a 283-amino-acid chain: Thymidylate synthase (283 aa).

Residue Arg-22 coordinates dUMP. The active-site Nucleophile is Cys-160. Residues 180–183, Asn-191, and 221–223 each bind dUMP; these read RSCD and HIY. Asp-183 is a (6R)-5,10-methylene-5,6,7,8-tetrahydrofolate binding site. Position 282 (Ser-282) interacts with (6R)-5,10-methylene-5,6,7,8-tetrahydrofolate.

This sequence belongs to the thymidylate synthase family. Bacterial-type ThyA subfamily. Homodimer.

It localises to the cytoplasm. It carries out the reaction dUMP + (6R)-5,10-methylene-5,6,7,8-tetrahydrofolate = 7,8-dihydrofolate + dTMP. The protein operates within pyrimidine metabolism; dTTP biosynthesis. Its function is as follows. Catalyzes the reductive methylation of 2'-deoxyuridine-5'-monophosphate (dUMP) to 2'-deoxythymidine-5'-monophosphate (dTMP) while utilizing 5,10-methylenetetrahydrofolate (mTHF) as the methyl donor and reductant in the reaction, yielding dihydrofolate (DHF) as a by-product. This enzymatic reaction provides an intracellular de novo source of dTMP, an essential precursor for DNA biosynthesis. The protein is Thymidylate synthase of Pasteurella multocida (strain Pm70).